Here is a 152-residue protein sequence, read N- to C-terminus: Large-conductance mechanosensitive channel (152 aa).

The next 3 helical transmembrane spans lie at 21–41, 44–64, and 92–112; these read IDLA…DSLV, VVMP…NKFL, and GNFI…FWMV.

Belongs to the MscL family. Homopentamer.

The protein resides in the cell inner membrane. In terms of biological role, channel that opens in response to stretch forces in the membrane lipid bilayer. May participate in the regulation of osmotic pressure changes within the cell. The chain is Large-conductance mechanosensitive channel from Bordetella bronchiseptica (strain ATCC BAA-588 / NCTC 13252 / RB50) (Alcaligenes bronchisepticus).